The chain runs to 240 residues: Hairy and enhancer of split-related protein HELT (240 aa).

The 56-residue stretch at 10–65 (RTPVSHKVIEKRRRDRINRCLNELGKTVPMALAKQSSGKLEKAEILEMTVQYLRAL) folds into the bHLH domain. At Lys48 the chain carries N6-acetyllysine. In terms of domain architecture, Orange spans 86–121 (FHYGYHECMKNLVHYLTTVERMETKDTKYARILAFL).

This sequence belongs to the HEY family. As to quaternary structure, self-associates. Interacts with HES5 and HEY2. Expressed in heart and testis.

The protein localises to the nucleus. Transcriptional repressor which binds preferentially to the canonical E box sequence 5'-CACGCG-3'. Required for the development of GABAergic neurons. The sequence is that of Hairy and enhancer of split-related protein HELT (Helt) from Mus musculus (Mouse).